The primary structure comprises 207 residues: Serotonin N-acetyltransferase (207 aa).

Positions 1-28 are disordered; sequence MSTQSTHPLKPEAPRLPPGIPESPSCQR. T31 is subject to Phosphothreonine; by PKA. Residues 35–194 form the N-acetyltransferase domain; sequence SEFRCLTPED…SLTFMELHCS (160 aa). Substrate is bound at residue L124. Acetyl-CoA is bound by residues 124–126 and 132–137; these read LAV and QQGRGP. M159 serves as a coordination point for substrate. An acetyl-CoA-binding site is contributed by 168–170; sequence YER. At S205 the chain carries Phosphoserine.

This sequence belongs to the acetyltransferase family. AANAT subfamily. In terms of assembly, monomer. Interacts with several 14-3-3 proteins, including YWHAB, YWHAE, YWHAG and YWHAZ, preferentially when phosphorylated at Thr-31. Phosphorylation on Ser-205 also allows binding to YWHAZ, but with lower affinity. The interaction with YWHAZ considerably increases affinity for arylalkylamines and acetyl-CoA and protects the enzyme from dephosphorylation and proteasomal degradation. It may also prevent thiol-dependent inactivation. CAMP-dependent phosphorylation on both N-terminal Thr-31 and C-terminal Ser-205 regulates AANAT activity by promoting interaction with 14-3-3 proteins. As to expression, highly expressed in pineal gland and at lower levels in the retina. Weak expression in several brain regions and in the pituitary gland.

It localises to the cytoplasm. It catalyses the reaction a 2-arylethylamine + acetyl-CoA = an N-acetyl-2-arylethylamine + CoA + H(+). It participates in aromatic compound metabolism; melatonin biosynthesis; melatonin from serotonin: step 1/2. Functionally, controls the night/day rhythm of melatonin production in the pineal gland. Catalyzes the N-acetylation of serotonin into N-acetylserotonin, the penultimate step in the synthesis of melatonin. This chain is Serotonin N-acetyltransferase (AANAT), found in Homo sapiens (Human).